A 565-amino-acid polypeptide reads, in one-letter code: Zinc finger protein 143 (565 aa).

7 C2H2-type zinc fingers span residues 230–254 (FRCD…ERSH), 260–284 (YQCD…VRTH), 290–314 (YRCS…VRTH), 320–344 (FKCP…IRTH), 350–374 (YYCS…VRIH), 380–404 (YVCT…HVVH), and 410–433 (YNCN…RTAH).

It belongs to the GLI C2H2-type zinc-finger protein family.

It localises to the nucleus. Functionally, transcriptional activator. Activates the gene for selenocysteine tRNA (tRNAsec). Binds to the activator element (AE) motif of the selenocysteine tRNA gene promoter. This Xenopus laevis (African clawed frog) protein is Zinc finger protein 143 (znf143).